We begin with the raw amino-acid sequence, 477 residues long: AAA-ATPase At3g28600 (477 aa).

The first 26 residues, 1 to 26, serve as a signal peptide directing secretion; the sequence is MMMGNTFGSSLASLFFLWATIQQIFP. 245 to 252 is a binding site for ATP; it reads GPPGTGKS.

This sequence belongs to the AAA ATPase family. BCS1 subfamily. It depends on Mg(2+) as a cofactor.

It catalyses the reaction ATP + H2O = ADP + phosphate + H(+). The polypeptide is AAA-ATPase At3g28600 (Arabidopsis thaliana (Mouse-ear cress)).